The chain runs to 616 residues: ATP-dependent zinc metalloprotease FtsH (616 aa).

At 1 to 8 (MRNLFKTA) the chain is on the cytoplasmic side. Residues 9-29 (TIYILIALVILLLVDIFSGGL) form a helical membrane-spanning segment. Topologically, residues 30-114 (SYNQFFSNLS…VTKEPPQVPW (85 aa)) are extracellular. The chain crosses the membrane as a helical span at residues 115–135 (WLSTFLPMLIFAGLMIFVWIF). At 136–616 (MLQQTQGGGS…VFEDAQPQLV (481 aa)) the chain is on the cytoplasmic side. 208 to 215 (GPPGTGKT) contributes to the ATP binding site. A Zn(2+)-binding site is contributed by histidine 430. Residue glutamate 431 is part of the active site. Histidine 434 and aspartate 506 together coordinate Zn(2+).

The protein in the central section; belongs to the AAA ATPase family. This sequence in the C-terminal section; belongs to the peptidase M41 family. As to quaternary structure, homohexamer. Requires Zn(2+) as cofactor.

It is found in the cell membrane. Its function is as follows. Acts as a processive, ATP-dependent zinc metallopeptidase for both cytoplasmic and membrane proteins. Plays a role in the quality control of integral membrane proteins. The protein is ATP-dependent zinc metalloprotease FtsH of Caldicellulosiruptor bescii (strain ATCC BAA-1888 / DSM 6725 / KCTC 15123 / Z-1320) (Anaerocellum thermophilum).